The chain runs to 405 residues: Serpin B12 (405 aa).

Residues 64–83 (SQNESKEPDPCLKSNKQKAG) are disordered.

The protein belongs to the serpin family. Ov-serpin subfamily. As to quaternary structure, interacts with SLFN12; as part of a pathway regulating cell differentiation. May interact with USP14. In terms of tissue distribution, expressed in many tissues, including brain, bone marrow, lymph node, heart, lung, liver, pancreas, testis, ovary, and intestine.

The protein resides in the cytoplasm. Functionally, inhibits trypsin and plasmin, but not thrombin, coagulation factor Xa, or urokinase-type plasminogen activator. May play a role in cell differentiation. The sequence is that of Serpin B12 (SERPINB12) from Homo sapiens (Human).